A 394-amino-acid chain; its full sequence is RNA binding protein fox-1 homolog 2 (394 aa).

Disordered stretches follow at residues 1–70 (MGRL…DYAG) and 83–135 (TQAH…HVSN). Composition is skewed to polar residues over residues 24–36 (RDSQ…TTTP) and 83–103 (TQAH…SLTT). The segment covering 105 to 125 (GGAQTDGQQSQTQSSENSESK) has biased composition (low complexity). The RRM domain maps to 129–205 (KRLHVSNIPF…RKIEVNNATA (77 aa)). Residue Arg285 is modified to Omega-N-methylarginine. 2 positions are modified to asymmetric dimethylarginine: Arg301 and Arg333. Arg385 and Arg390 each carry asymmetric dimethylarginine; alternate. Residues Arg385 and Arg390 each carry the omega-N-methylarginine; alternate modification.

Interacts with ER-alpha N-terminal activation domain. Interacts with RBPMS; the interaction allows cooperative assembly of stable cell-specific alternative splicing regulatory complexes.

The protein resides in the nucleus. It localises to the cytoplasm. Its function is as follows. RNA-binding protein that regulates alternative splicing events by binding to 5'-UGCAUGU-3' elements. Prevents binding of U2AF2 to the 3'-splice site. Regulates alternative splicing of tissue-specific exons and of differentially spliced exons during erythropoiesis. Seems to act as a coregulatory factor of ER-alpha. Together with RNA binding proteins RBPMS and MBNL1/2, activates vascular smooth muscle cells alternative splicing events. This is RNA binding protein fox-1 homolog 2 (RBFOX2) from Bos taurus (Bovine).